The chain runs to 241 residues: uncharacterized protein (241 aa).

A Cupin type-2 domain is found at 22–78 (SHKHAYSQFLFPLEGSIDLETEGRQVKLNPDHFLYIPPQCEHRFRSIGRNECLVLDV). An HTH araC/xylS-type domain is found at 137 to 235 (YASIAYIHSH…GMPPRLYRNT (99 aa)). 2 consecutive DNA-binding regions (H-T-H motif) follow at residues 154–175 (KKLA…KKQT) and 202–225 (LTVV…TKST).

This is an uncharacterized protein from Bacillus subtilis (strain 168).